Consider the following 305-residue polypeptide: DNA-directed RNA polymerase 35 kDa subunit (305 aa).

Belongs to the poxviridae DNA-directed RNA polymerase 35 kDa subunit family. As to quaternary structure, the DNA-dependent RNA polymerase used for intermediate and late genes expression consists of eight subunits 147 kDa, 133 kDa, 35 kDa, 30 kDa, 22 kDa, 19 kDa, 18 kDa and 7 kDa totalling more than 500 kDa in mass. The same holoenzyme, with the addition of the transcription-specificity factor RAP94, is used for early gene expression.

The protein localises to the virion. The enzyme catalyses RNA(n) + a ribonucleoside 5'-triphosphate = RNA(n+1) + diphosphate. Part of the DNA-dependent RNA polymerase which catalyzes the transcription of viral DNA into RNA using the four ribonucleoside triphosphates as substrates. Responsible for the transcription of early, intermediate and late genes. DNA-dependent RNA polymerase associates with the early transcription factor (ETF), itself composed of D6 and A7, thereby allowing the early genes transcription. Late transcription, and probably also intermediate transcription, require newly synthesized RNA polymerase. In Variola virus (isolate Human/India/Ind3/1967) (VARV), this protein is DNA-directed RNA polymerase 35 kDa subunit (OPG156).